A 600-amino-acid polypeptide reads, in one-letter code: DNA primase (600 aa).

Residues 38–62 (CPFHDEKTPSFIVYPTRGHYHCYGC) form a CHC2-type zinc finger. The Toprim domain maps to 253–333 (KRVILVEGQA…GIAVIVCRLP (81 aa)). Mg(2+) contacts are provided by Glu259, Asp304, and Asp306.

The protein belongs to the DnaG primase family. As to quaternary structure, monomer. Interacts with DnaB. Zn(2+) serves as cofactor. Requires Mg(2+) as cofactor.

It carries out the reaction ssDNA + n NTP = ssDNA/pppN(pN)n-1 hybrid + (n-1) diphosphate.. Functionally, RNA polymerase that catalyzes the synthesis of short RNA molecules used as primers for DNA polymerase during DNA replication. The sequence is that of DNA primase from Chlamydia muridarum (strain MoPn / Nigg).